A 204-amino-acid chain; its full sequence is ATP-dependent Clp protease proteolytic subunit (204 aa).

Ser-100 acts as the Nucleophile in catalysis. The active site involves His-125.

The protein belongs to the peptidase S14 family. Fourteen ClpP subunits assemble into 2 heptameric rings which stack back to back to give a disk-like structure with a central cavity, resembling the structure of eukaryotic proteasomes.

It localises to the cytoplasm. It catalyses the reaction Hydrolysis of proteins to small peptides in the presence of ATP and magnesium. alpha-casein is the usual test substrate. In the absence of ATP, only oligopeptides shorter than five residues are hydrolyzed (such as succinyl-Leu-Tyr-|-NHMec, and Leu-Tyr-Leu-|-Tyr-Trp, in which cleavage of the -Tyr-|-Leu- and -Tyr-|-Trp bonds also occurs).. Its function is as follows. Cleaves peptides in various proteins in a process that requires ATP hydrolysis. Has a chymotrypsin-like activity. Plays a major role in the degradation of misfolded proteins. The protein is ATP-dependent Clp protease proteolytic subunit of Anaeromyxobacter sp. (strain Fw109-5).